A 203-amino-acid polypeptide reads, in one-letter code: Protein GrpE (203 aa).

Belongs to the GrpE family. As to quaternary structure, homodimer.

The protein localises to the cytoplasm. Participates actively in the response to hyperosmotic and heat shock by preventing the aggregation of stress-denatured proteins, in association with DnaK and GrpE. It is the nucleotide exchange factor for DnaK and may function as a thermosensor. Unfolded proteins bind initially to DnaJ; upon interaction with the DnaJ-bound protein, DnaK hydrolyzes its bound ATP, resulting in the formation of a stable complex. GrpE releases ADP from DnaK; ATP binding to DnaK triggers the release of the substrate protein, thus completing the reaction cycle. Several rounds of ATP-dependent interactions between DnaJ, DnaK and GrpE are required for fully efficient folding. This Pseudoalteromonas translucida (strain TAC 125) protein is Protein GrpE.